The chain runs to 633 residues: MNNRGGFSHPPGKFHMRGSKTYTPRNGGQGQGQPQQAAPAFDQQQQQQQQQQQQQQQQQQNFDQQQQQPQQPQQQQGGNNYYFQSKFGNKSHRGGYHGNGNGNNNGNNNNNNTSPNLNSTSHNNNNNNNNNNNNNNNNNNNTHFTNSRGGHRGGSSRGGSSRGGNSGSSRGGSRGGYRGQSSFYNSSYQKSGPRLLTSIVSLPPFSGGAIIGVKGSLWGLLNKATTARLKVFKNTAIIKCADAQQLDRAKEIVLKLKNTSPKYLSLIDYKGEQKIKFVHQPSFSEVILESGAIDPLATDGVQLMQDLINSHESQYVARLNETFSTLYSEKGSSTPFIDIEAGKIWYLHSSNIPSTPMTADKYELYTESLASVFQPSNVINEQFITSSQYKLFKQKKQFTFISVLDTESLDLLCIKCSEEKITPTTTTTTNTQQSPNSDSSEYKFTDPFIYKLNHINSSKVLFPQIKSGSDLRVTIDTHSKSKLVSGTGQHQYDNLIKFIDSIKIHKNSSGNNTYQIPDSNLFMTESIITRKVLMYRSDDNSLQFHVNEDIATRYTTSTPEVNRESTTVFCTSPALYDLFKSKNWTVDQASDELKKLSKNLRLLVSKHLDSTKFQPPSADHTTQFEQDDEEEEN.

A disordered region spans residues methionine 1–tyrosine 188. 2 stretches are compositionally biased toward low complexity: residues glycine 32–asparagine 80 and asparagine 104–arginine 148. Positions arginine 152–arginine 178 are enriched in gly residues. Residues lysine 580–histidine 607 are a coiled coil. Residues threonine 611–asparagine 633 form a disordered region.

This is an uncharacterized protein from Dictyostelium discoideum (Social amoeba).